Here is an 814-residue protein sequence, read N- to C-terminus: Kinesin-like protein KIF6 (814 aa).

In terms of domain architecture, Kinesin motor spans 5–345 (TIQIFARVKP…CRFAQRVALI (341 aa)). 97–104 (GQTGSGKT) is a binding site for ATP. Coiled coils occupy residues 356 to 385 (NPRL…QRTE), 456 to 494 (LKEE…EALH), and 588 to 683 (EAKA…KEFE). The interval 752-788 (LPSPCPSPHSQKQSSTSTPLEDSIPKRPVSSIPLTGD) is disordered. Residues 759-771 (PHSQKQSSTSTPL) are compositionally biased toward polar residues.

This sequence belongs to the TRAFAC class myosin-kinesin ATPase superfamily. Kinesin family.

The protein localises to the cytoplasm. It is found in the cytoskeleton. The sequence is that of Kinesin-like protein KIF6 (KIF6) from Homo sapiens (Human).